The primary structure comprises 198 residues: MAFELPPLPYAHDALQPHISKETLEYHHDKHHNTYVVNLNNLVPGTEFEGKTLEEIVKSSSGGIFNNAAQVWNHTFYWNCLSPNGGGQPTGALADAINAAFGSFDKFKEEFTKTSVGTFGSGWGWLVKKADGSLALASTIGAGCPLTSGDTPLLTCDVWEHAYYIDYRNLRPKYVEAFWNLVNWAFVAEQFEGKTFKA.

Residues His27, His74, Asp157, and His161 each contribute to the Fe cation site.

This sequence belongs to the iron/manganese superoxide dismutase family. In terms of assembly, homodimer. Fe cation is required as a cofactor.

It catalyses the reaction 2 superoxide + 2 H(+) = H2O2 + O2. In terms of biological role, destroys superoxide anion radicals which are normally produced within the cells and which are toxic to biological systems. The sequence is that of Superoxide dismutase [Fe] (sodB) from Pseudomonas putida (strain ATCC 47054 / DSM 6125 / CFBP 8728 / NCIMB 11950 / KT2440).